Reading from the N-terminus, the 398-residue chain is S-adenosylmethionine synthase (398 aa).

136–141 (GTGSSD) contacts ATP.

The protein belongs to the AdoMet synthase 2 family. Requires Mg(2+) as cofactor.

The enzyme catalyses L-methionine + ATP + H2O = S-adenosyl-L-methionine + phosphate + diphosphate. Its pathway is amino-acid biosynthesis; S-adenosyl-L-methionine biosynthesis; S-adenosyl-L-methionine from L-methionine: step 1/1. In terms of biological role, catalyzes the formation of S-adenosylmethionine from methionine and ATP. The protein is S-adenosylmethionine synthase of Methanosarcina acetivorans (strain ATCC 35395 / DSM 2834 / JCM 12185 / C2A).